Consider the following 162-residue polypeptide: Transcriptional repressor NrdR (162 aa).

A zinc finger lies at 3 to 34 (CPYCHHTDSRVLESRSAEGGQSIRRRRECLAC). The ATP-cone domain maps to 49 to 139 (ITVIKRNGDR…VYRQFQGISD (91 aa)).

The protein belongs to the NrdR family. Zn(2+) is required as a cofactor.

In terms of biological role, negatively regulates transcription of bacterial ribonucleotide reductase nrd genes and operons by binding to NrdR-boxes. This is Transcriptional repressor NrdR from Thermosynechococcus vestitus (strain NIES-2133 / IAM M-273 / BP-1).